We begin with the raw amino-acid sequence, 217 residues long: GTP cyclohydrolase 1 (217 aa).

Positions 109, 112, and 180 each coordinate Zn(2+).

The protein belongs to the GTP cyclohydrolase I family. In terms of assembly, toroid-shaped homodecamer, composed of two pentamers of five dimers.

It carries out the reaction GTP + H2O = 7,8-dihydroneopterin 3'-triphosphate + formate + H(+). It functions in the pathway cofactor biosynthesis; 7,8-dihydroneopterin triphosphate biosynthesis; 7,8-dihydroneopterin triphosphate from GTP: step 1/1. The protein is GTP cyclohydrolase 1 of Vibrio parahaemolyticus serotype O3:K6 (strain RIMD 2210633).